Reading from the N-terminus, the 339-residue chain is DNA-directed RNA polymerase subunit alpha (339 aa).

Positions 1 to 235 are alpha N-terminal domain (alpha-NTD); the sequence is MVREEVAVST…DLFIPFLHGE (235 aa). The segment at 267–339 is alpha C-terminal domain (alpha-CTD); the sequence is KAIALECIFI…FTIDLPKNKF (73 aa).

The protein belongs to the RNA polymerase alpha chain family. In terms of assembly, in plastids the minimal PEP RNA polymerase catalytic core is composed of four subunits: alpha, beta, beta', and beta''. When a (nuclear-encoded) sigma factor is associated with the core the holoenzyme is formed, which can initiate transcription.

The protein resides in the plastid. The protein localises to the chloroplast. It carries out the reaction RNA(n) + a ribonucleoside 5'-triphosphate = RNA(n+1) + diphosphate. In terms of biological role, DNA-dependent RNA polymerase catalyzes the transcription of DNA into RNA using the four ribonucleoside triphosphates as substrates. The chain is DNA-directed RNA polymerase subunit alpha from Drimys granadensis.